We begin with the raw amino-acid sequence, 886 residues long: Alanine--tRNA ligase (886 aa).

H570, H574, C672, and H676 together coordinate Zn(2+).

It belongs to the class-II aminoacyl-tRNA synthetase family. The cofactor is Zn(2+).

The protein localises to the cytoplasm. It catalyses the reaction tRNA(Ala) + L-alanine + ATP = L-alanyl-tRNA(Ala) + AMP + diphosphate. Its function is as follows. Catalyzes the attachment of alanine to tRNA(Ala) in a two-step reaction: alanine is first activated by ATP to form Ala-AMP and then transferred to the acceptor end of tRNA(Ala). Also edits incorrectly charged Ser-tRNA(Ala) and Gly-tRNA(Ala) via its editing domain. This chain is Alanine--tRNA ligase, found in Acidothermus cellulolyticus (strain ATCC 43068 / DSM 8971 / 11B).